A 407-amino-acid chain; its full sequence is Argininosuccinate synthase (407 aa).

ATP is bound by residues 12 to 20 (AYSGGLDTS) and Ala-39. Residues Tyr-92 and Ser-97 each contribute to the L-citrulline site. Gly-122 is a binding site for ATP. Residues Thr-124, Asn-128, and Asp-129 each coordinate L-aspartate. Asn-128 serves as a coordination point for L-citrulline. 5 residues coordinate L-citrulline: Arg-132, Ser-182, Ser-191, Glu-267, and Tyr-279.

This sequence belongs to the argininosuccinate synthase family. Type 1 subfamily. As to quaternary structure, homotetramer.

The protein localises to the cytoplasm. The catalysed reaction is L-citrulline + L-aspartate + ATP = 2-(N(omega)-L-arginino)succinate + AMP + diphosphate + H(+). The protein operates within amino-acid biosynthesis; L-arginine biosynthesis; L-arginine from L-ornithine and carbamoyl phosphate: step 2/3. This Campylobacter fetus subsp. fetus (strain 82-40) protein is Argininosuccinate synthase.